The primary structure comprises 342 residues: N-alpha-acetyl-L-2,4-diaminobutyric acid deacetylase (342 aa).

Residues 103-124 (TAGRRTSPMDGGNLNRSFPGDP) form a disordered region.

This sequence belongs to the DoeB deacetylase family. Requires Zn(2+) as cofactor.

It is found in the cytoplasm. The enzyme catalyses (2S)-2-acetamido-4-aminobutanoate + H2O = L-2,4-diaminobutanoate + acetate. Its function is as follows. Involved in the degradation of ectoine, which allows H.elongata to utilize ectoine as both a carbon and a nitrogen source for growth. Catalyzes the deacetylation of N-alpha-acetyl-L-2,4-diaminobutyrate (N-alpha-Ac-DABA) to yield L-2,4-diaminobutyrate (DABA). The chain is N-alpha-acetyl-L-2,4-diaminobutyric acid deacetylase from Halomonas elongata (strain ATCC 33173 / DSM 2581 / NBRC 15536 / NCIMB 2198 / 1H9).